The sequence spans 238 residues: tRNA (guanine-N(7)-)-methyltransferase (238 aa).

E68, E93, D120, and D143 together coordinate S-adenosyl-L-methionine. The active site involves D143. Substrate is bound by residues K147, D179, and 216 to 219 (TKFE).

Belongs to the class I-like SAM-binding methyltransferase superfamily. TrmB family.

It catalyses the reaction guanosine(46) in tRNA + S-adenosyl-L-methionine = N(7)-methylguanosine(46) in tRNA + S-adenosyl-L-homocysteine. It functions in the pathway tRNA modification; N(7)-methylguanine-tRNA biosynthesis. Catalyzes the formation of N(7)-methylguanine at position 46 (m7G46) in tRNA. The chain is tRNA (guanine-N(7)-)-methyltransferase from Ectopseudomonas mendocina (strain ymp) (Pseudomonas mendocina).